The following is a 226-amino-acid chain: Orotidine 5'-phosphate decarboxylase (226 aa).

Substrate contacts are provided by residues D8, K30, 58–67, T117, R177, Q186, G206, and R207; that span reads DLKIHDIPNT. The Proton donor role is filled by K60.

It belongs to the OMP decarboxylase family. Type 1 subfamily. In terms of assembly, homodimer.

The catalysed reaction is orotidine 5'-phosphate + H(+) = UMP + CO2. It participates in pyrimidine metabolism; UMP biosynthesis via de novo pathway; UMP from orotate: step 2/2. Functionally, catalyzes the decarboxylation of orotidine 5'-monophosphate (OMP) to uridine 5'-monophosphate (UMP). The polypeptide is Orotidine 5'-phosphate decarboxylase (Campylobacter jejuni subsp. doylei (strain ATCC BAA-1458 / RM4099 / 269.97)).